A 238-amino-acid chain; its full sequence is Cysteine-rich venom protein (238 aa).

The N-terminal stretch at M1–G19 is a signal peptide. The propeptide occupies T20–S27. The SCP domain occupies K39–Y164. Cystine bridges form between C75-C153, C92-C165, C148-C162, C184-C191, C187-C196, C200-C233, C209-C227, and C218-C231. A ShKT domain is found at C200–C233.

The protein belongs to the CRISP family. In terms of tissue distribution, expressed by the venom gland.

The protein resides in the secreted. Its function is as follows. Blocks olfactory (CNGA2) and retinal (CNGA1) cyclic nucleotide-gated (CNG) ion channel currents. Does not inhibit retinal (CNGA3) currents. It forms high-affinity contacts with the pore turret region and most likely inhibits CNG channel current by blocking the external entrance to the transmembrane pore. Does not affect neither depolarization- nor caffeine-induced contraction arterial smooth muscle. This chain is Cysteine-rich venom protein, found in Demansia vestigiata (Lesser black whip snake).